The following is a 407-amino-acid chain: Aurora kinase (407 aa).

2 disordered regions span residues methionine 1–serine 43 and glutamate 66–lysine 137. Low complexity-rich tracts occupy residues serine 31–serine 43 and serine 126–serine 136. The Protein kinase domain maps to phenylalanine 147–isoleucine 399. ATP is bound by residues lysine 157, lysine 176, and leucine 224–alanine 227. Aspartate 272 serves as the catalytic Proton acceptor. Position 290 (aspartate 290) interacts with ATP.

It belongs to the protein kinase superfamily. Ser/Thr protein kinase family.

The protein resides in the cytoplasm. It is found in the cytoskeleton. Its subcellular location is the spindle. The protein localises to the midbody. It localises to the microtubule organizing center. The protein resides in the centrosome. It is found in the nucleus. Its subcellular location is the chromosome. The protein localises to the centromere. It carries out the reaction L-seryl-[protein] + ATP = O-phospho-L-seryl-[protein] + ADP + H(+). It catalyses the reaction L-threonyl-[protein] + ATP = O-phospho-L-threonyl-[protein] + ADP + H(+). With respect to regulation, cdc2 activity is required for activation. Serine/threonine protein kinase that contributes to the regulation of cell cycle progression. Involved in meiotic apparatus formation and polar body extrusion. Contributes to Plk1 activation and phosphorylation of histone H3 at 'Ser-10' during meiosis I. Required for accurate progression of early embryonic M phase. Involved in chromosome alignment and cleavage furrow formation during early embryonic cycles. May be involved in mitotic spindle formation and cytokinesis. The polypeptide is Aurora kinase (Patiria pectinifera (Starfish)).